The sequence spans 152 residues: Transcriptional regulator MraZ (152 aa).

2 SpoVT-AbrB domains span residues 5–52 (ATQI…TLSE) and 81–124 (ASEC…DEQA).

It belongs to the MraZ family. Forms oligomers.

It is found in the cytoplasm. Its subcellular location is the nucleoid. Negatively regulates its own expression and that of the subsequent genes in the proximal part of the division and cell wall (dcw) gene cluster. Acts by binding directly to DNA. May also regulate the expression of genes outside the dcw cluster. This Photorhabdus laumondii subsp. laumondii (strain DSM 15139 / CIP 105565 / TT01) (Photorhabdus luminescens subsp. laumondii) protein is Transcriptional regulator MraZ.